We begin with the raw amino-acid sequence, 377 residues long: UDP-N,N'-diacetylbacillosamine 2-epimerase (hydrolyzing) (377 aa).

It belongs to the UDP-N-acetylglucosamine 2-epimerase family.

The enzyme catalyses UDP-N,N'-diacetylbacillosamine + H2O = 2,4-diacetamido-2,4,6-trideoxy-alpha-D-mannopyranose + UDP + H(+). Involved in biosynthesis of legionaminic acid (5,7-diamino-3,5,7,9-tetradeoxy-D-glycero-D-galacto-non-2-ulosonic acid)(Leg), a sialic acid-like derivative that is incorporated into virulence-associated cell surface glycoconjugates such as lipopolysaccharide (LPS) which could be a key determinant in the ability of L.pneumophila to inhibit the fusion of phagosomes with lysosomes. LPS contains a majority alpha2,4-linked homomer of legionaminic acid. Catalyzes the conversion of UDP-N,N'-diacetylbacillosamine (Bac2Ac4Ac) into 2,4-diacetamido-2,4,6-trideoxymannose and UDP. In Legionella pneumophila subsp. pneumophila (strain Philadelphia 1 / ATCC 33152 / DSM 7513), this protein is UDP-N,N'-diacetylbacillosamine 2-epimerase (hydrolyzing).